The primary structure comprises 396 residues: GTPase Obg (396 aa).

An Obg domain is found at 1–159; that stretch reads MKFVDEATIY…RNIRLELKVL (159 aa). The region spanning 160–333 is the OBG-type G domain; the sequence is ADVGLLGLPN…LCQDIMTWIE (174 aa). Residues 166-173, 191-195, 213-216, 283-286, and 314-316 each bind GTP; these read GLPNAGKS, FTTLV, DIPG, NKTD, and SAL. 2 residues coordinate Mg(2+): Ser173 and Thr193. Disordered regions lie at residues 337-356 and 373-396; these read EEERDDPEVAEADRLNREQM and LARKKAKESDDDDDDEDVEVFYAP. Basic and acidic residues predominate over residues 347 to 356; the sequence is EADRLNREQM. Residues 381-396 show a composition bias toward acidic residues; sequence SDDDDDDEDVEVFYAP.

Belongs to the TRAFAC class OBG-HflX-like GTPase superfamily. OBG GTPase family. In terms of assembly, monomer. Mg(2+) serves as cofactor.

It is found in the cytoplasm. In terms of biological role, an essential GTPase which binds GTP, GDP and possibly (p)ppGpp with moderate affinity, with high nucleotide exchange rates and a fairly low GTP hydrolysis rate. Plays a role in control of the cell cycle, stress response, ribosome biogenesis and in those bacteria that undergo differentiation, in morphogenesis control. The sequence is that of GTPase Obg from Hahella chejuensis (strain KCTC 2396).